The sequence spans 167 residues: Photosystem I assembly protein Ycf3 (167 aa).

TPR repeat units lie at residues 35-68 (AFTY…EIDP), 72-105 (SYIL…NPSL), and 120-153 (GEQA…APGN).

Belongs to the Ycf3 family.

Its subcellular location is the plastid. It localises to the chloroplast thylakoid membrane. Functionally, essential for the assembly of the photosystem I (PSI) complex. May act as a chaperone-like factor to guide the assembly of the PSI subunits. In Chara vulgaris (Common stonewort), this protein is Photosystem I assembly protein Ycf3.